The sequence spans 255 residues: Protein BEAN1 (255 aa).

A helical transmembrane segment spans residues 37–57 (VLVASAVIGVVITLSCITIIV). Residues 69-90 (QRHHHRHRRHHHHHRHRRRRHR) show a composition bias toward basic residues. Disordered stretches follow at residues 69–109 (QRHH…MPYA) and 160–255 (DAPP…ERIV). The segment covering 193–206 (QRTQGQSRLHTVSM) has biased composition (polar residues). Low complexity predominate over residues 217–226 (GTGSPSDLLP). Over residues 234 to 243 (PSNSQGSPIP) the composition is skewed to polar residues. Residues 244–255 (TQAPMPSPERIV) show a composition bias toward pro residues.

As to quaternary structure, interacts with NEDD4.

The protein localises to the membrane. The polypeptide is Protein BEAN1 (Bean1) (Mus musculus (Mouse)).